Consider the following 72-residue polypeptide: Alpha-elapitoxin-Dv2b (72 aa).

5 disulfides stabilise this stretch: cysteine 3-cysteine 21, cysteine 14-cysteine 42, cysteine 27-cysteine 31, cysteine 46-cysteine 57, and cysteine 58-cysteine 63.

This sequence belongs to the three-finger toxin family. Long-chain subfamily. Type II alpha-neurotoxin sub-subfamily. In terms of processing, neurotoxin 4.7.3 differs from 4.9.3 only in that Trp-26 has undergone partial photooxidation. Expressed by the venom gland.

The protein resides in the secreted. In terms of biological role, binds with high affinity to muscular (alpha-1/CHRNA1) and neuronal (alpha-7/CHRNA7) nicotinic acetylcholine receptor (nAChR) and inhibits acetylcholine from binding to the receptor, thereby impairing neuromuscular and neuronal transmission. This Dendroaspis viridis (Western green mamba) protein is Alpha-elapitoxin-Dv2b.